The chain runs to 129 residues: uncharacterized protein (129 aa).

The span at 85 to 108 (SSAADSDDSSSCSECDSDALLSDD) shows a compositional bias: low complexity. The tract at residues 85–110 (SSAADSDDSSSCSECDSDALLSDDGP) is disordered.

This is an uncharacterized protein from Microplitis demolitor (Parasitoid wasp).